The following is a 141-amino-acid chain: Small ribosomal subunit protein bS16 (141 aa).

Positions T84–A141 are disordered. Residues S89 to E111 show a composition bias toward basic and acidic residues. The segment covering A115–A141 has biased composition (low complexity).

It belongs to the bacterial ribosomal protein bS16 family.

The protein is Small ribosomal subunit protein bS16 of Parvibaculum lavamentivorans (strain DS-1 / DSM 13023 / NCIMB 13966).